Consider the following 598-residue polypeptide: Transcription factor cpaR (598 aa).

Positions 22–51 (CNGCRERKRRCVRRKRELPCLSCQAENRPC) form a DNA-binding region, zn(2)-C6 fungal-type.

The protein localises to the nucleus. Its function is as follows. Transcription factor; part of the gene cluster that mediates the biosynthesis of the fungal neurotoxin cyclopiazonic acid (CPA), a nanomolar inhibitor of Ca(2+)-ATPase with a unique pentacyclic indole tetramic acid scaffold. The polypeptide is Transcription factor cpaR (Aspergillus oryzae (Yellow koji mold)).